We begin with the raw amino-acid sequence, 378 residues long: tRNA (guanine(26)-N(2))-dimethyltransferase (378 aa).

In terms of domain architecture, Trm1 methyltransferase spans 4–374 (KEVTEGKVRI…KGYEEIIRCV (371 aa)). Arg-44, Arg-69, Asp-87, Asp-114, and Ala-115 together coordinate S-adenosyl-L-methionine. The Zn(2+) site is built by Cys-246, Cys-249, Cys-263, and Cys-266.

This sequence belongs to the class I-like SAM-binding methyltransferase superfamily. Trm1 family.

It catalyses the reaction guanosine(26) in tRNA + 2 S-adenosyl-L-methionine = N(2)-dimethylguanosine(26) in tRNA + 2 S-adenosyl-L-homocysteine + 2 H(+). Dimethylates a single guanine residue at position 26 of a number of tRNAs using S-adenosyl-L-methionine as donor of the methyl groups. This Saccharolobus islandicus (strain M.16.27) (Sulfolobus islandicus) protein is tRNA (guanine(26)-N(2))-dimethyltransferase.